A 266-amino-acid polypeptide reads, in one-letter code: Putative carbamate hydrolase RutD (266 aa).

The protein belongs to the AB hydrolase superfamily. Hydrolase RutD family.

The enzyme catalyses carbamate + 2 H(+) = NH4(+) + CO2. Functionally, involved in pyrimidine catabolism. May facilitate the hydrolysis of carbamate, a reaction that can also occur spontaneously. This is Putative carbamate hydrolase RutD from Escherichia coli O150:H5 (strain SE15).